We begin with the raw amino-acid sequence, 217 residues long: Formate dehydrogenase, nitrate-inducible, cytochrome b556(Fdn) subunit (217 aa).

At 1–11 the chain is on the cytoplasmic side; the sequence is MSKSKMIVRTK. A helical membrane pass occupies residues 12–36; that stretch reads FIDRACHWTVVICFFLVALSGISFF. His18 contributes to the heme b binding site. Topologically, residues 37–52 are periplasmic; the sequence is FPTLQWLTQTFGTPQM. Residues 53 to 74 traverse the membrane as a helical segment; the sequence is GRILHPFFGIAIFVALMFMFVR. Residue His57 coordinates heme b. At 75–110 the chain is on the cytoplasmic side; that stretch reads FVHHNIPDKKDIPWLLNIVEVLKGNEHKVADVGKYN. A helical membrane pass occupies residues 111 to 134; the sequence is AGQKMMFWSIMSMIFVLLVTGVII. Over 135–150 the chain is Periplasmic; the sequence is WRPYFAQYFPMQVVRY. A helical transmembrane segment spans residues 151 to 175; that stretch reads SLLIHAAAGIILIHAILIHMYMAFW. His155 and His169 together coordinate heme b. His169 contributes to the a menaquinone binding site. The Cytoplasmic portion of the chain corresponds to 176 to 217; that stretch reads VKGSIKGMIEGKVSRRWAKKHHPRWYREIEKAEAKKESEEGI.

The protein belongs to the formate dehydrogenase gamma subunit family. As to quaternary structure, trimer of heterotrimers, consisting of subunits alpha, beta and gamma. It depends on heme as a cofactor.

Its subcellular location is the cell inner membrane. In terms of biological role, formate dehydrogenase allows the bacterium to use formate as major electron donor during anaerobic respiration, when nitrate is used as electron acceptor. Subunit gamma is the cytochrome b556 component of the formate dehydrogenase-N, and also contains a menaquinone reduction site that receives electrons from the beta subunit (FdnH), through its hemes. Formate dehydrogenase-N is part of a system that generates proton motive force, together with the dissimilatory nitrate reductase (Nar). In Escherichia coli O157:H7, this protein is Formate dehydrogenase, nitrate-inducible, cytochrome b556(Fdn) subunit (fdnI).